Consider the following 373-residue polypeptide: Putative F-box protein At1g76830 (373 aa).

The F-box domain maps to 4-49; sequence ITSFENLPEELKREILLRMSPNSLVTCSRVSKKLASMIRTKSFKEL.

This chain is Putative F-box protein At1g76830, found in Arabidopsis thaliana (Mouse-ear cress).